The chain runs to 203 residues: Outer-membrane lipoprotein carrier protein (203 aa).

Residues 1–21 form the signal peptide; that stretch reads MKKLAITCALLSGMVVSQVWA. A disordered region spans residues 184 to 203; that stretch reads DASKFTFTPPKGVTVDDQRK.

This sequence belongs to the LolA family. In terms of assembly, monomer.

The protein localises to the periplasm. Participates in the translocation of lipoproteins from the inner membrane to the outer membrane. Only forms a complex with a lipoprotein if the residue after the N-terminal Cys is not an aspartate (The Asp acts as a targeting signal to indicate that the lipoprotein should stay in the inner membrane). The polypeptide is Outer-membrane lipoprotein carrier protein (Klebsiella pneumoniae (strain 342)).